Reading from the N-terminus, the 105-residue chain is Large ribosomal subunit protein uL24 (105 aa).

This sequence belongs to the universal ribosomal protein uL24 family. Part of the 50S ribosomal subunit.

Its function is as follows. One of two assembly initiator proteins, it binds directly to the 5'-end of the 23S rRNA, where it nucleates assembly of the 50S subunit. In terms of biological role, one of the proteins that surrounds the polypeptide exit tunnel on the outside of the subunit. In Wolbachia pipientis wMel, this protein is Large ribosomal subunit protein uL24.